Reading from the N-terminus, the 65-residue chain is Large ribosomal subunit protein bL33c (65 aa).

Belongs to the bacterial ribosomal protein bL33 family.

It is found in the plastid. The protein localises to the chloroplast. This Marchantia polymorpha (Common liverwort) protein is Large ribosomal subunit protein bL33c (rpl33).